Here is a 156-residue protein sequence, read N- to C-terminus: Large ribosomal subunit protein uL13 (156 aa).

It belongs to the universal ribosomal protein uL13 family. As to quaternary structure, part of the 50S ribosomal subunit.

Its function is as follows. This protein is one of the early assembly proteins of the 50S ribosomal subunit, although it is not seen to bind rRNA by itself. It is important during the early stages of 50S assembly. This Archaeoglobus fulgidus (strain ATCC 49558 / DSM 4304 / JCM 9628 / NBRC 100126 / VC-16) protein is Large ribosomal subunit protein uL13.